The following is a 140-amino-acid chain: uncharacterized protein (140 aa).

This is an uncharacterized protein from Synechococcus sp. (strain WH8020).